The sequence spans 300 residues: Acetylglutamate kinase (300 aa).

Substrate contacts are provided by residues 72-73 (GG), Arg-94, and Asn-197.

The protein belongs to the acetylglutamate kinase family. ArgB subfamily.

The protein localises to the cytoplasm. The catalysed reaction is N-acetyl-L-glutamate + ATP = N-acetyl-L-glutamyl 5-phosphate + ADP. It participates in amino-acid biosynthesis; L-arginine biosynthesis; N(2)-acetyl-L-ornithine from L-glutamate: step 2/4. Its function is as follows. Catalyzes the ATP-dependent phosphorylation of N-acetyl-L-glutamate. The polypeptide is Acetylglutamate kinase (Azoarcus sp. (strain BH72)).